The sequence spans 435 residues: Adenylosuccinate synthetase (435 aa).

GTP is bound by residues 20–26 (GDEGKGK) and 48–50 (GHT). Asp-21 (proton acceptor) is an active-site residue. The Mg(2+) site is built by Asp-21 and Gly-48. IMP contacts are provided by residues 21–24 (DEGK), 46–49 (NAGH), Thr-134, Arg-148, Gln-229, Thr-244, and Arg-308. His-49 functions as the Proton donor in the catalytic mechanism. Substrate is bound at residue 304–310 (TTTGRPR). GTP contacts are provided by residues Arg-310, 336-338 (KVD), and 422-424 (SMG).

This sequence belongs to the adenylosuccinate synthetase family. Homodimer. Mg(2+) is required as a cofactor.

The protein resides in the cytoplasm. It catalyses the reaction IMP + L-aspartate + GTP = N(6)-(1,2-dicarboxyethyl)-AMP + GDP + phosphate + 2 H(+). Its pathway is purine metabolism; AMP biosynthesis via de novo pathway; AMP from IMP: step 1/2. Functionally, plays an important role in the de novo pathway of purine nucleotide biosynthesis. Catalyzes the first committed step in the biosynthesis of AMP from IMP. This is Adenylosuccinate synthetase from Thermoplasma acidophilum (strain ATCC 25905 / DSM 1728 / JCM 9062 / NBRC 15155 / AMRC-C165).